Consider the following 610-residue polypeptide: Zinc metalloproteinase-disintegrin-like 3a (610 aa).

An N-terminal signal peptide occupies residues 1–19 (MIQVLLVTILAVFPYQGSS). Positions 20–188 (IILGSGNVND…KKASQLVVTA (169 aa)) are excised as a propeptide. The Peptidase M12B domain occupies 198–394 (RYVELVIVAD…YTPKCILNEP (197 aa)). Ca(2+) is bound at residue glutamate 201. An N-linked (GlcNAc...) asparagine glycan is attached at asparagine 217. Aspartate 285 contacts Ca(2+). Disulfide bonds link cysteine 309–cysteine 389, cysteine 349–cysteine 373, and cysteine 351–cysteine 356. Histidine 334 contacts Zn(2+). Glutamate 335 is a catalytic residue. Positions 338 and 344 each coordinate Zn(2+). Positions 389, 392, 404, 407, 411, 414, and 417 each coordinate Ca(2+). The Disintegrin domain occupies 402–488 (PPVCGNELLE…DCPTDDFHKN (87 aa)). 14 disulfides stabilise this stretch: cysteine 405-cysteine 434, cysteine 416-cysteine 429, cysteine 418-cysteine 424, cysteine 428-cysteine 451, cysteine 442-cysteine 448, cysteine 447-cysteine 473, cysteine 460-cysteine 480, cysteine 467-cysteine 499, cysteine 492-cysteine 504, cysteine 511-cysteine 561, cysteine 526-cysteine 572, cysteine 539-cysteine 549, cysteine 556-cysteine 598, and cysteine 592-cysteine 603. Positions 466-468 (ECD) match the D/ECD-tripeptide motif.

It belongs to the venom metalloproteinase (M12B) family. P-III subfamily. Zn(2+) is required as a cofactor. Expressed by the venom gland.

It localises to the secreted. Functionally, snake venom metalloproteinase that impairs hemostasis in the envenomed animal. The protein is Zinc metalloproteinase-disintegrin-like 3a of Crotalus adamanteus (Eastern diamondback rattlesnake).